A 729-amino-acid polypeptide reads, in one-letter code: U-box domain-containing protein 17 (729 aa).

Residues 304–378 (TVPKDFVCPI…VQWCTASGIS (75 aa)) enclose the U-box domain. ARM repeat units follow at residues 438-477 (KENR…NLSI), 479-520 (EKNK…SLSA), 523-562 (EYKK…NLST), and 564-601 (PDNC…LLVR).

It catalyses the reaction S-ubiquitinyl-[E2 ubiquitin-conjugating enzyme]-L-cysteine + [acceptor protein]-L-lysine = [E2 ubiquitin-conjugating enzyme]-L-cysteine + N(6)-ubiquitinyl-[acceptor protein]-L-lysine.. Its pathway is protein modification; protein ubiquitination. In terms of biological role, functions as an E3 ubiquitin ligase. The sequence is that of U-box domain-containing protein 17 (PUB17) from Arabidopsis thaliana (Mouse-ear cress).